A 66-amino-acid chain; its full sequence is Large ribosomal subunit protein bL33c (66 aa).

Belongs to the bacterial ribosomal protein bL33 family.

The protein localises to the plastid. It localises to the chloroplast. The protein is Large ribosomal subunit protein bL33c of Lotus japonicus (Lotus corniculatus var. japonicus).